The primary structure comprises 237 residues: Ribose-5-phosphate isomerase A (237 aa).

Substrate is bound by residues 33–36 (TGST), 90–93 (DGAD), and 103–106 (KGGG). Glu-112 functions as the Proton acceptor in the catalytic mechanism. Lys-130 is a substrate binding site.

Belongs to the ribose 5-phosphate isomerase family. Homodimer.

It carries out the reaction aldehydo-D-ribose 5-phosphate = D-ribulose 5-phosphate. It functions in the pathway carbohydrate degradation; pentose phosphate pathway; D-ribose 5-phosphate from D-ribulose 5-phosphate (non-oxidative stage): step 1/1. Its function is as follows. Catalyzes the reversible conversion of ribose-5-phosphate to ribulose 5-phosphate. This is Ribose-5-phosphate isomerase A from Gloeothece citriformis (strain PCC 7424) (Cyanothece sp. (strain PCC 7424)).